The chain runs to 530 residues: T-complex protein 1 subunit zeta (530 aa).

Gly38 contributes to the ADP binding site. Gly38 provides a ligand contact to ATP. Asp89 serves as a coordination point for Mg(2+). ADP-binding residues include Gly90, Thr91, Thr92, Ser93, Thr157, Lys158, and Ala410. Positions 90, 91, and 92 each coordinate ATP. The ATP site is built by Ala410, Gly411, Asp495, and Lys500. Asp495 is an ADP binding site.

As to quaternary structure, component of the chaperonin-containing T-complex (TRiC), a hexadecamer composed of two identical back-to-back stacked rings enclosing a protein folding chamber. Each ring is made up of eight different subunits: TCP1/CCT1, CCT2, CCT3, CCT4, CCT5, CCT6A/CCT6, CCT7, CCT8. Interacts with PACRG.

The protein localises to the cytoplasm. The catalysed reaction is ATP + H2O = ADP + phosphate + H(+). In terms of biological role, component of the chaperonin-containing T-complex (TRiC), a molecular chaperone complex that assists the folding of actin, tubulin and other proteins upon ATP hydrolysis. The chain is T-complex protein 1 subunit zeta from Gallus gallus (Chicken).